The chain runs to 481 residues: Delta 4,5-hexuronate-2-O-sulfatase (481 aa).

The residue at position 64 (Ser64) is a 3-oxoalanine (Ser). Residues Cys225, Cys226, His462, and His469 each coordinate Zn(2+). The disordered stretch occupies residues Val453–Lys481. Residues Pro472 to Lys481 show a composition bias toward basic and acidic residues.

The protein belongs to the sulfatase family. The cofactor is Zn(2+). The conversion to 3-oxoalanine (also known as C-formylglycine, FGly), of a serine or cysteine residue in prokaryotes and of a cysteine residue in eukaryotes, is critical for catalytic activity.

In terms of biological role, exosulfatase involved in the degradation of the glycosaminoglycans (GAGs) chondroitin sulfate (CS), dermatan sulfate (DS) and heparan sulfate (HS). 2-O-sulfatase active on unsaturated non-reducing end hexuronate units. Has a slight preference for HS-derived structures. GAG-specific sulfatases play a key role in the persistence of the major human gut symbiont B.thetaiotaomicron in the host gastrointestinal tract. This is Delta 4,5-hexuronate-2-O-sulfatase from Bacteroides thetaiotaomicron (strain ATCC 29148 / DSM 2079 / JCM 5827 / CCUG 10774 / NCTC 10582 / VPI-5482 / E50).